Reading from the N-terminus, the 602-residue chain is Protein DGS1, mitochondrial (602 aa).

2 consecutive transmembrane segments (helical) span residues 300-320 (LYWV…IWLL) and 465-485 (INFA…MLTV).

As to quaternary structure, component of a mitochondrial large protein complex that contains, at least, MIC60, DGS1, TOM40 (e.g. TOM40-1), TOM20 proteins (e.g. TOM20-2), and petC/RISP.

Its subcellular location is the mitochondrion outer membrane. Its function is as follows. Involved in galactoglycerolipid biosynthesis. Contributes to an intracellular signal that regulates an alternative DGD1-independent galactoglycerolipid biosynthesis pathway in chloroplasts. Being involved in mitochondrial lipid homeostasis, modulates mitochondrion biogenesis and physiology, as well as stress responses. In Arabidopsis thaliana (Mouse-ear cress), this protein is Protein DGS1, mitochondrial.